The following is a 312-amino-acid chain: Polyamine aminopropyltransferase (312 aa).

The 241-residue stretch at 7–247 (FFWVQEYFTP…GPLGFALAAQ (241 aa)) folds into the PABS domain. Gln-36 is an S-methyl-5'-thioadenosine binding site. His-67 and Glu-95 together coordinate spermidine. S-methyl-5'-thioadenosine-binding positions include Asp-115 and 147–148 (DA). The Proton acceptor role is filled by Asp-165. Pro-174 is a binding site for S-methyl-5'-thioadenosine.

Belongs to the spermidine/spermine synthase family. Homodimer or homotetramer.

The protein localises to the cytoplasm. It catalyses the reaction S-adenosyl 3-(methylsulfanyl)propylamine + putrescine = S-methyl-5'-thioadenosine + spermidine + H(+). It participates in amine and polyamine biosynthesis; spermidine biosynthesis; spermidine from putrescine: step 1/1. Its function is as follows. Catalyzes the irreversible transfer of a propylamine group from the amino donor S-adenosylmethioninamine (decarboxy-AdoMet) to putrescine (1,4-diaminobutane) to yield spermidine. This chain is Polyamine aminopropyltransferase, found in Synechococcus sp. (strain JA-2-3B'a(2-13)) (Cyanobacteria bacterium Yellowstone B-Prime).